Reading from the N-terminus, the 430-residue chain is Serine hydroxymethyltransferase 2 (430 aa).

(6S)-5,6,7,8-tetrahydrofolate contacts are provided by residues Leu128 and 132–134 (GHL). An N6-(pyridoxal phosphate)lysine modification is found at Lys237.

Belongs to the SHMT family. As to quaternary structure, homodimer. Requires pyridoxal 5'-phosphate as cofactor.

It is found in the cytoplasm. The catalysed reaction is (6R)-5,10-methylene-5,6,7,8-tetrahydrofolate + glycine + H2O = (6S)-5,6,7,8-tetrahydrofolate + L-serine. The protein operates within one-carbon metabolism; tetrahydrofolate interconversion. It functions in the pathway amino-acid biosynthesis; glycine biosynthesis; glycine from L-serine: step 1/1. In terms of biological role, catalyzes the reversible interconversion of serine and glycine with tetrahydrofolate (THF) serving as the one-carbon carrier. This reaction serves as the major source of one-carbon groups required for the biosynthesis of purines, thymidylate, methionine, and other important biomolecules. Also exhibits THF-independent aldolase activity toward beta-hydroxyamino acids, producing glycine and aldehydes, via a retro-aldol mechanism. This is Serine hydroxymethyltransferase 2 from Rhodospirillum rubrum (strain ATCC 11170 / ATH 1.1.1 / DSM 467 / LMG 4362 / NCIMB 8255 / S1).